The chain runs to 483 residues: Regulatory protein ViaA (483 aa).

The protein belongs to the ViaA family. Homodimer. Interacts with RavA.

It localises to the cytoplasm. In terms of biological role, component of the RavA-ViaA chaperone complex, which may act on the membrane to optimize the function of some of the respiratory chains. ViaA stimulates the ATPase activity of RavA. The sequence is that of Regulatory protein ViaA from Escherichia coli O139:H28 (strain E24377A / ETEC).